The chain runs to 149 residues: Oligosaccharyltransferase complex subunit OSTC (149 aa).

At 1-32 (METLFRLPFAVLECPNIKLKRPGWVHMPSAMT) the chain is on the cytoplasmic side. A helical transmembrane segment spans residues 33–53 (VYALVVVSYFLITGGIIYDVI). The Extracellular portion of the chain corresponds to 54 to 83 (VEPPSVGSMTDEHGHQRPVAFLAYRVNGQY). A helical transmembrane segment spans residues 84–104 (IMEGLASSFLFTMGGLGFIIL). Residues 105–117 (DRSNAPNIPKLNR) lie on the Cytoplasmic side of the membrane. The helical transmembrane segment at 118 to 138 (FLLLFIGFVSVLLSFFMARVF) threads the bilayer. The Extracellular portion of the chain corresponds to 139 to 149 (MRMKLPGYLMG).

This sequence belongs to the OSTC family. In terms of assembly, specific component of the STT3A-containing form of the oligosaccharyltransferase (OST) complex.

Its subcellular location is the membrane. Its pathway is protein modification; protein glycosylation. In terms of biological role, specific component of the STT3A-containing form of the oligosaccharyl transferase (OST) complex that catalyzes the initial transfer of a defined glycan (Glc(3)Man(9)GlcNAc(2) in eukaryotes) from the lipid carrier dolichol-pyrophosphate to an asparagine residue within an Asn-X-Ser/Thr consensus motif in nascent polypeptide chains, the first step in protein N-glycosylation. N-glycosylation occurs cotranslationally and the complex associates with the Sec61 complex at the channel-forming translocon complex that mediates protein translocation across the endoplasmic reticulum (ER). All subunits are required for a maximal enzyme activity. This is Oligosaccharyltransferase complex subunit OSTC from Gallus gallus (Chicken).